The primary structure comprises 216 residues: GTP-binding nuclear protein Ran, testis-specific isoform (216 aa).

Alanine 2 bears the N-acetylalanine mark. In terms of domain architecture, Small GTPase Ran-type spans 7 to 171; sequence PQVQFKVVLV…FWLARKLIGD (165 aa). 17-24 is a binding site for GTP; the sequence is GDGGTGKT. Threonine 24 is subject to Phosphothreonine. The interval 37–45 is switch-I; sequence KEYVATLGV. Residue lysine 60 is modified to N6-acetyllysine. 65–69 contributes to the GTP binding site; it reads DTAGQ. Residues 68-84 are switch-II; sequence GQEKFGGLRDGYYIQAQ. Residue lysine 71 is modified to N6-acetyllysine; alternate. Residue lysine 71 forms a Glycyl lysine isopeptide (Lys-Gly) (interchain with G-Cter in SUMO2); alternate linkage. Lysine 71 is covalently cross-linked (Glycyl lysine isopeptide (Lys-Gly) (interchain with G-Cter in ubiquitin); alternate). Residue lysine 99 is modified to N6-acetyllysine. Residue 122–125 participates in GTP binding; the sequence is NKVD. N6-acetyllysine is present on lysine 134. Lysine 159 bears the N6-acetyllysine; alternate mark. Residue lysine 159 is modified to N6-succinyllysine; alternate.

The protein belongs to the small GTPase superfamily. Ran family. As to expression, testis specific.

Its subcellular location is the nucleus. The enzyme catalyses GTP + H2O = GDP + phosphate + H(+). Its function is as follows. GTP-binding protein involved in nucleocytoplasmic transport. Required for the import of protein into the nucleus and also for RNA export. Involved in chromatin condensation and control of cell cycle. The protein is GTP-binding nuclear protein Ran, testis-specific isoform (Rasl2-9) of Mus musculus (Mouse).